A 221-amino-acid chain; its full sequence is Transcription factor HES-4 (221 aa).

Residues 1–22 (MAADTPGKPSASPMAGAPASAS) are compositionally biased toward low complexity. Residues 1–49 (MAADTPGKPSASPMAGAPASASRTPDKPRSAAEHRKSSKPVMEKRRRAR) form a disordered region. The span at 24–35 (TPDKPRSAAEHR) shows a compositional bias: basic and acidic residues. Residues 34–91 (HRKSSKPVMEKRRRARINESLAQLKTLILDALRKESSRHSKLEKADILEMTVRHLRSL) form the bHLH domain. Positions 110-143 (YRAGFHECLAEVNRFLAGCEGVPADVRSRLLGHL) constitute an Orange domain. Residues 201-221 (LPAAPRAGPQGPGGPWRPWLR) are disordered. The WRPW motif signature appears at 216 to 219 (WRPW).

Transcription repression requires formation of a complex with a corepressor protein of the Groucho/TLE family.

The protein localises to the nucleus. Functionally, transcriptional repressor. Binds DNA on N-box motifs: 5'-CACNAG-3'. The protein is Transcription factor HES-4 (HES4) of Homo sapiens (Human).